The sequence spans 395 residues: Chaperone protein DnaJ 2 (395 aa).

Positions 10 to 75 constitute a J domain; it reads DYYADLGVSK…TKRREYDDLK (66 aa). The CR-type zinc finger occupies 165–242; the sequence is GTTIPVELTG…CRGRGTVRRT (78 aa). Zn(2+) is bound by residues cysteine 178, cysteine 181, cysteine 194, cysteine 197, cysteine 216, cysteine 219, cysteine 230, and cysteine 233. 4 CXXCXGXG motif repeats span residues 178–185, 194–201, 216–223, and 230–237; these read CNTCHGSG, CGQCNGSG, CTNCGGTG, and CVDCRGRG.

It belongs to the DnaJ family. In terms of assembly, homodimer. Zn(2+) serves as cofactor.

The protein resides in the cytoplasm. Its function is as follows. Participates actively in the response to hyperosmotic and heat shock by preventing the aggregation of stress-denatured proteins and by disaggregating proteins, also in an autonomous, DnaK-independent fashion. Unfolded proteins bind initially to DnaJ; upon interaction with the DnaJ-bound protein, DnaK hydrolyzes its bound ATP, resulting in the formation of a stable complex. GrpE releases ADP from DnaK; ATP binding to DnaK triggers the release of the substrate protein, thus completing the reaction cycle. Several rounds of ATP-dependent interactions between DnaJ, DnaK and GrpE are required for fully efficient folding. Also involved, together with DnaK and GrpE, in the DNA replication of plasmids through activation of initiation proteins. The protein is Chaperone protein DnaJ 2 of Corynebacterium efficiens (strain DSM 44549 / YS-314 / AJ 12310 / JCM 11189 / NBRC 100395).